Reading from the N-terminus, the 116-residue chain is Protein Wnt-5a (116 aa).

Ser1 carries the O-palmitoleoyl serine; by PORCN lipid modification. Residues Asn69 and Asn83 are each glycosylated (N-linked (GlcNAc...) asparagine). Residues Cys82 and Cys97 are joined by a disulfide bond.

Belongs to the Wnt family. Post-translationally, palmitoleoylation is required for efficient binding to frizzled receptors. Depalmitoleoylation leads to Wnt signaling pathway inhibition.

The protein localises to the secreted. Its subcellular location is the extracellular space. It is found in the extracellular matrix. Functionally, ligand for members of the frizzled family of seven transmembrane receptors. Can activate or inhibit canonical Wnt signaling, depending on receptor context. Required during embryogenesis for extension of the primary anterior-posterior axis. The polypeptide is Protein Wnt-5a (WNT-5A) (Alopias vulpinus (Common thresher shark)).